Consider the following 440-residue polypeptide: Transposon Ty1-NL1 Gag polyprotein (440 aa).

Composition is skewed to polar residues over residues 1–23 (MESQ…SVTS), 48–60 (TKAN…TPAS), 71–86 (SPQT…GPYQ), and 131–152 (PQYP…GNTF). Disordered stretches follow at residues 1–86 (MESQ…GPYQ), 131–171 (PQYP…YVRP), and 350–425 (QQES…TEPI). Over residues 153–165 (TDSSSADSDMTST) the composition is skewed to low complexity. The tract at residues 299 to 401 (NNGIPINNKV…NSQSRTARAH (103 aa)) is RNA-binding. Residues 363-372 (NPSDEKKDSR) show a composition bias toward basic and acidic residues. Over residues 373–412 (TYTNTTKPKSITRNSQKPNNSQSRTARAHNVSTSNNSSGP) the composition is skewed to polar residues.

Homotrimer.

The protein resides in the cytoplasm. In terms of biological role, capsid protein (CA) is the structural component of the virus-like particle (VLP), forming the shell that encapsulates the retrotransposons dimeric RNA genome. The particles are assembled from trimer-clustered units and there are holes in the capsid shells that allow for the diffusion of macromolecules. CA also has nucleocapsid-like chaperone activity, promoting primer tRNA(i)-Met annealing to the multipartite primer-binding site (PBS), dimerization of Ty1 RNA and initiation of reverse transcription. This Saccharomyces cerevisiae (strain ATCC 204508 / S288c) (Baker's yeast) protein is Transposon Ty1-NL1 Gag polyprotein (TY1A-NL1).